The following is a 264-amino-acid chain: Thymidylate synthase (264 aa).

R21 provides a ligand contact to dUMP. H51 serves as a coordination point for (6R)-5,10-methylene-5,6,7,8-tetrahydrofolate. R126 to R127 serves as a coordination point for dUMP. C146 serves as the catalytic Nucleophile. DUMP is bound by residues R166–D169, N177, and H207–Y209. Residue D169 participates in (6R)-5,10-methylene-5,6,7,8-tetrahydrofolate binding. A263 contacts (6R)-5,10-methylene-5,6,7,8-tetrahydrofolate.

The protein belongs to the thymidylate synthase family. Bacterial-type ThyA subfamily. In terms of assembly, homodimer.

It localises to the cytoplasm. The enzyme catalyses dUMP + (6R)-5,10-methylene-5,6,7,8-tetrahydrofolate = 7,8-dihydrofolate + dTMP. Its pathway is pyrimidine metabolism; dTTP biosynthesis. Functionally, catalyzes the reductive methylation of 2'-deoxyuridine-5'-monophosphate (dUMP) to 2'-deoxythymidine-5'-monophosphate (dTMP) while utilizing 5,10-methylenetetrahydrofolate (mTHF) as the methyl donor and reductant in the reaction, yielding dihydrofolate (DHF) as a by-product. This enzymatic reaction provides an intracellular de novo source of dTMP, an essential precursor for DNA biosynthesis. The sequence is that of Thymidylate synthase from Vesicomyosocius okutanii subsp. Calyptogena okutanii (strain HA).